The primary structure comprises 326 residues: Flavanone 3-dioxygenase 3 (326 aa).

The span at 1 to 15 (MSDTSKGIPQEQLPS) shows a compositional bias: polar residues. Residues 1-21 (MSDTSKGIPQEQLPSQELHPP) are disordered. One can recognise a Fe2OG dioxygenase domain in the interval 175–276 (EGLQLLSVNC…RISLASIHGF (102 aa)). H200, D202, and H257 together coordinate Fe cation. Residue R267 participates in 2-oxoglutarate binding.

It belongs to the iron/ascorbate-dependent oxidoreductase family. The cofactor is Fe(2+). L-ascorbate is required as a cofactor. Expressed at very low levels in roots, leaves, stems and seeds.

The catalysed reaction is a (2S)-flavan-4-one + 2-oxoglutarate + O2 = a (2R,3R)-dihydroflavonol + succinate + CO2. Its pathway is secondary metabolite biosynthesis; flavonoid biosynthesis. Functionally, catalyzes the 3-beta-hydroxylation of 2S-flavanones to 2R,3R-dihydroflavonols which are intermediates in the biosynthesis of flavonols, anthocyanidins, catechins and proanthocyanidins in plants. Converts (2S)-eriodictyol to (+)-taxifolin and (2S)-naringenin to (+)-(2R/3R)-dihydrokaempferol in vitro. This is Flavanone 3-dioxygenase 3 from Oryza sativa subsp. japonica (Rice).